The primary structure comprises 72 residues: Disintegrin sasaimin (72 aa).

The Disintegrin domain occupies 1 to 72 (EAGEECDCGA…SAGCPRNPFH (72 aa)). Intrachain disulfides connect Cys6–Cys21, Cys8–Cys16, Cys15–Cys38, Cys29–Cys35, Cys34–Cys59, and Cys47–Cys66. Residues 51 to 53 (RGD) carry the Cell attachment site motif.

Belongs to the venom metalloproteinase (M12B) family. P-II subfamily. P-IIa sub-subfamily. In terms of assembly, monomer. In terms of tissue distribution, expressed by the venom gland.

The protein resides in the secreted. Its function is as follows. Inhibits ADP- (IC(50)=66 nM) and collagen-induced (IC(50)=100 nM) aggregation of human platelets. In vitro, inhibits adhesion of endothelial cells to vitronectin, type-I collagen and, to a lower degree, fibronectin and laminin. The protein is Disintegrin sasaimin of Cerrophidion sasai (Costa Rica montane pitviper).